We begin with the raw amino-acid sequence, 63 residues long: MKAQELRTKSVEELNAELVNLLGEQFKLRMQAATGQLQQTHQLKQVRRSIAQIKTVLTEKAGE.

Belongs to the universal ribosomal protein uL29 family.

The polypeptide is Large ribosomal subunit protein uL29 (rpmC) (Aggregatibacter actinomycetemcomitans (Actinobacillus actinomycetemcomitans)).